The sequence spans 441 residues: Ribosomal protein uS12 methylthiotransferase RimO (441 aa).

An MTTase N-terminal domain is found at 7–117 (PKISFVSLGC…VLEAVHRALP (111 aa)). Residues Cys-16, Cys-52, Cys-81, Cys-148, Cys-152, and Cys-155 each coordinate [4Fe-4S] cluster. The Radical SAM core domain occupies 134–371 (LTPRHYAYLK…MARQQKISAR (238 aa)). Residues 374 to 440 (KRKVGTRQQV…AYDLHGTVAG (67 aa)) form the TRAM domain.

This sequence belongs to the methylthiotransferase family. RimO subfamily. The cofactor is [4Fe-4S] cluster.

Its subcellular location is the cytoplasm. It carries out the reaction L-aspartate(89)-[ribosomal protein uS12]-hydrogen + (sulfur carrier)-SH + AH2 + 2 S-adenosyl-L-methionine = 3-methylsulfanyl-L-aspartate(89)-[ribosomal protein uS12]-hydrogen + (sulfur carrier)-H + 5'-deoxyadenosine + L-methionine + A + S-adenosyl-L-homocysteine + 2 H(+). Functionally, catalyzes the methylthiolation of an aspartic acid residue of ribosomal protein uS12. The polypeptide is Ribosomal protein uS12 methylthiotransferase RimO (Rhodopseudomonas palustris (strain BisA53)).